Here is a 436-residue protein sequence, read N- to C-terminus: Protein translocase subunit SecY (436 aa).

Helical transmembrane passes span 17–37 (ILLT…PVPY), 72–92 (FGLL…IQLL), 122–142 (TFFW…EVIF), 146–166 (LQVY…VLWF), 209–229 (FSNI…CIYI), 269–289 (VMPL…FEII), 309–329 (ISYW…IFFF), and 380–400 (IFLI…NLNI).

Belongs to the SecY/SEC61-alpha family. As to quaternary structure, component of the plastid Sec protein translocase complex, which is composed of at least SecY and SecE.

The protein localises to the plastid. The protein resides in the chloroplast thylakoid membrane. In terms of biological role, the central subunit of the protein translocation channel SecYE. Consists of two halves. These two domains form a lateral gate at the front which open onto the bilayer between TMs 2 and 7, and are clamped together by SecE at the back. The channel is closed by both a pore ring composed of hydrophobic SecY resides and a short helix (helix 2A) on the extracellular side of the membrane which forms a plug. The sequence is that of Protein translocase subunit SecY from Vaucheria litorea (Yellow-green alga).